Here is a 392-residue protein sequence, read N- to C-terminus: Formate-dependent phosphoribosylglycinamide formyltransferase (392 aa).

N(1)-(5-phospho-beta-D-ribosyl)glycinamide contacts are provided by residues 20–21 and glutamate 80; that span reads EL. ATP is bound by residues arginine 112, lysine 153, 158–163, 193–196, and glutamate 201; these read SSGKGQ and EGFI. The ATP-grasp domain occupies 117-306; the sequence is RLAAETLALP…EFALHVRAIL (190 aa). The Mg(2+) site is built by glutamate 265 and glutamate 277. Residues aspartate 284, lysine 354, and 361-362 each bind N(1)-(5-phospho-beta-D-ribosyl)glycinamide; that span reads RR.

This sequence belongs to the PurK/PurT family. Homodimer.

It catalyses the reaction N(1)-(5-phospho-beta-D-ribosyl)glycinamide + formate + ATP = N(2)-formyl-N(1)-(5-phospho-beta-D-ribosyl)glycinamide + ADP + phosphate + H(+). It functions in the pathway purine metabolism; IMP biosynthesis via de novo pathway; N(2)-formyl-N(1)-(5-phospho-D-ribosyl)glycinamide from N(1)-(5-phospho-D-ribosyl)glycinamide (formate route): step 1/1. Its function is as follows. Involved in the de novo purine biosynthesis. Catalyzes the transfer of formate to 5-phospho-ribosyl-glycinamide (GAR), producing 5-phospho-ribosyl-N-formylglycinamide (FGAR). Formate is provided by PurU via hydrolysis of 10-formyl-tetrahydrofolate. This Shewanella amazonensis (strain ATCC BAA-1098 / SB2B) protein is Formate-dependent phosphoribosylglycinamide formyltransferase.